The primary structure comprises 542 residues: Signal peptide peptidase-like 5 (542 aa).

Positions 1 to 23 (MAAATAAVFALLMASALAGAAAG) are cleaved as a signal peptide. Residues 24–192 (GDIVHHDDEA…PDRPVVDTAE (169 aa)) are Lumenal-facing. N-linked (GlcNAc...) asparagine glycans are attached at residues Asn-79 and Asn-145. Residues 92 to 167 (CTSPKEKVSG…LPRDAGFALH (76 aa)) enclose the PA domain. Residues 193 to 213 (VFLWLMAVGTVLCASYWSAWS) traverse the membrane as a helical segment. Topologically, residues 214–245 (AREALCEQEKLLKDGREVLLNVENGSSSGMID) are cytoplasmic. The chain crosses the membrane as a helical span at residues 246–266 (INVASAIMFVVVASCFLIMLY). Residues 267 to 275 (KMMSSWFVE) are Lumenal-facing. A helical membrane pass occupies residues 276-296 (LLVVIFCVGGVEGLQTCLVAL). The Cytoplasmic segment spans residues 297–316 (LSRWFRAASESFFKVPFFGA). A helical transmembrane segment spans residues 317 to 337 (VSYLTLAVSPFCIVFAVLWAV). Residues 338–342 (HRHFT) are Lumenal-facing. Residues 343–363 (YAWIGQDILGIALIITVIQIV) form a helical membrane-spanning segment. Topologically, residues 364-367 (RVPN) are cytoplasmic. A helical transmembrane segment spans residues 368–388 (LKVGSVLLSCAFFYDIFWVFV). Residue Asp-382 is part of the active site. The Lumenal segment spans residues 389 to 426 (SKRWFHESVMIVVARGDKTDEDGVPMLLKIPRMFDPWG). The chain crosses the membrane as a helical span at residues 427 to 447 (GYSIIGFGDILLPGLLVAFAL). The active site involves Asp-435. Topologically, residues 448 to 459 (RYDWAAKKSLQT) are cytoplasmic. A helical membrane pass occupies residues 460-480 (GYFLWSMVAYGSGLLITYVAL). Topologically, residues 481 to 486 (NLMDGH) are lumenal. A helical transmembrane segment spans residues 487 to 507 (GQPALLYIVPFTLGALISLGW). The short motif at 489–491 (PAL) is the PAL element. The Cytoplasmic portion of the chain corresponds to 508–542 (KRGELWNLWSKGEPERVCPHHMHMQPQPKTPPLVQ).

It belongs to the peptidase A22B family. In terms of processing, glycosylated.

The protein localises to the endosome membrane. Its function is as follows. Intramembrane-cleaving aspartic protease (I-CLiP) that cleaves type II membrane signal peptides in the hydrophobic plane of the membrane. The sequence is that of Signal peptide peptidase-like 5 (SPPL5) from Oryza sativa subsp. japonica (Rice).